The following is a 306-amino-acid chain: Protein translocase subunit SecF (306 aa).

6 helical membrane-spanning segments follow: residues 17–37 (AFAVTLILTVIALGSWFTKGI), 134–154 (GLGMLLALGGILLYVGFRFQW), 158–178 (LGAILSLVHDAIIVMGVLSFF), 185–205 (TVLAAVLAVVGYSLNDTIVIF), 232–254 (LLRTIATSVSTLLAIAALLFFGG), and 268–288 (VMAGTYSSIYIANVVLIWLNL).

It belongs to the SecD/SecF family. SecF subfamily. As to quaternary structure, forms a complex with SecD. Part of the essential Sec protein translocation apparatus which comprises SecA, SecYEG and auxiliary proteins SecDF-YajC and YidC.

It is found in the cell inner membrane. Part of the Sec protein translocase complex. Interacts with the SecYEG preprotein conducting channel. SecDF uses the proton motive force (PMF) to complete protein translocation after the ATP-dependent function of SecA. The polypeptide is Protein translocase subunit SecF (Pseudomonas aeruginosa (strain ATCC 15692 / DSM 22644 / CIP 104116 / JCM 14847 / LMG 12228 / 1C / PRS 101 / PAO1)).